Consider the following 138-residue polypeptide: Small ribosomal subunit protein uS11c (138 aa).

The disordered stretch occupies residues 1 to 21; the sequence is MAKSISKIGSRKNARIGSRKQ. Over residues 9–21 the composition is skewed to basic residues; it reads GSRKNARIGSRKQ.

The protein belongs to the universal ribosomal protein uS11 family. In terms of assembly, part of the 30S ribosomal subunit.

The protein resides in the plastid. The protein localises to the chloroplast. This chain is Small ribosomal subunit protein uS11c, found in Cicer arietinum (Chickpea).